The sequence spans 677 residues: Pre-mRNA-splicing factor CLF1 (677 aa).

HAT repeat units lie at residues Glu-52 to Glu-84, Lys-86 to Lys-118, Arg-120 to Met-152, Gly-154 to Arg-185, Asn-187 to Glu-218, Gly-220 to Lys-255, Lys-257 to Gln-291, Val-301 to Ser-333, Gly-335 to Phe-369, Lys-379 to Arg-415, Met-417 to Gln-448, Phe-450 to Gly-482, Asp-484 to Tyr-518, Gly-520 to Asn-551, Glu-570 to Thr-608, and Asp-613 to Pro-646.

Belongs to the crooked-neck family. In terms of assembly, associated with the spliceosome.

Its subcellular location is the nucleus. In terms of biological role, involved in pre-mRNA splicing and cell cycle progression. Required for the spliceosome assembly and initiation of the DNA replication. In Paracoccidioides brasiliensis, this protein is Pre-mRNA-splicing factor CLF1 (CLF1).